A 325-amino-acid polypeptide reads, in one-letter code: Cyclic AMP-responsive element-binding protein 1 (325 aa).

Composition is skewed to polar residues over residues 1–11 (MESGAENQQSG) and 18–27 (AESQQMTVQA). Disordered stretches follow at residues 1 to 27 (MESG…TVQA) and 92 to 111 (SEDS…RREI). The KID domain maps to 85–144 (QISTIAESEDSQESVDSVTDSQKRREILSRRPSYRKILNDLSSDAPGVPRIEEEKSEEET). Ser-117 is subject to Phosphoserine; by CaMK1, CaMK2, CaMK4, PKB/AKT1 or PKB/AKT2, RPS6KA3, RPS6KA4, RPS6KA5 and SGK1. Lys-120 is covalently cross-linked (Glycyl lysine isopeptide (Lys-Gly) (interchain with G-Cter in SUMO2)). The tract at residues 124–146 (DLSSDAPGVPRIEEEKSEEETSA) is disordered. Ser-126 carries the phosphoserine; by CaMK2 modification. At Ser-255 the chain carries Phosphoserine; by HIPK2. The bZIP domain maps to 267 to 325 (ARKREVRLMKNREAARECRRKKKEYVKCLENRVAVLENQNKTLIEELKALKDLYCHKSD). Residues 268–293 (RKREVRLMKNREAARECRRKKKEYVK) are basic motif. Residues Lys-269 and Lys-288 each participate in a glycyl lysine isopeptide (Lys-Gly) (interchain with G-Cter in SUMO1) cross-link. The segment at 295–316 (LENRVAVLENQNKTLIEELKAL) is leucine-zipper.

The protein belongs to the bZIP family. In terms of assembly, interacts with PPRC1. Binds DNA as a dimer. This dimer is stabilized by magnesium ions. Interacts, through the bZIP domain, with the coactivators CRTC1/TORC1, CRTC2/TORC2 and CRTC3/TORC3. When phosphorylated on Ser-117, binds CREBBP. Interacts with CREBL2; regulates CREB1 phosphorylation, stability and transcriptional activity. Interacts (phosphorylated form) with TOX3. Interacts with ARRB1. Binds to HIPK2. Interacts with SGK1. Interacts with TSSK4; this interaction facilitates phosphorylation on Ser-117. Forms a complex with KMT2A and CREBBP. Interacts with TOX4; CREB1 is required for full induction of TOX4-dependent activity and the interaction is increased by cAMP and inhibited by insulin. Post-translationally, sumoylated with SUMO1. Sumoylation on Lys-288, but not on Lys-269, is required for nuclear localization of this protein. Sumoylation is enhanced under hypoxia, promoting nuclear localization and stabilization. In terms of processing, stimulated by phosphorylation. Phosphorylation of both Ser-117 and Ser-126 in the SCN regulates the activity of CREB and participates in circadian rhythm generation. Phosphorylation of Ser-117 allows CREBBP binding. Phosphorylated upon calcium influx by CaMK4 and CaMK2 on Ser-117. CaMK4 is much more potent than CaMK2 in activating CREB. Phosphorylated by CaMK2 on Ser-126. Phosphorylation of Ser-126 blocks CREB-mediated transcription even when Ser-117 is phosphorylated. Phosphorylated by CaMK1. Phosphorylation of Ser-255 by HIPK2 in response to genotoxic stress promotes CREB1 activity, facilitating the recruitment of the coactivator CBP. Phosphorylated at Ser-117 by RPS6KA3, RPS6KA4 and RPS6KA5 in response to mitogenic or stress stimuli. CREBL2 positively regulates phosphorylation at Ser-117 thereby stimulating CREB1 transcriptional activity. In liver, phosphorylation is induced by fasting or glucagon in a circadian fashion. Phosphorylated by TSSK4 on Ser-117.

Its subcellular location is the nucleus. Functionally, phosphorylation-dependent transcription factor that stimulates transcription upon binding to the DNA cAMP response element (CRE), a sequence present in many viral and cellular promoters. Transcription activation is enhanced by the TORC coactivators which act independently of Ser-117 phosphorylation. Involved in different cellular processes including the synchronization of circadian rhythmicity and the differentiation of adipose cells. Regulates the expression of apoptotic and inflammatory response factors in cardiomyocytes in response to ERFE-mediated activation of AKT signaling. This is Cyclic AMP-responsive element-binding protein 1 (CREB1) from Bos taurus (Bovine).